A 490-amino-acid polypeptide reads, in one-letter code: Betaine aldehyde dehydrogenase (490 aa).

Residues T26, I27, and D93 each contribute to the K(+) site. Position 150 to 152 (150 to 152 (GAW)) interacts with NAD(+). The Charge relay system role is filled by K162. 176–179 (KPSE) provides a ligand contact to NAD(+). Residue V180 coordinates K(+). 230–233 (GVAS) serves as a coordination point for NAD(+). L246 contacts K(+). E252 functions as the Proton acceptor in the catalytic mechanism. Residues G254, C286, and E387 each coordinate NAD(+). C286 serves as the catalytic Nucleophile. C286 bears the Cysteine sulfenic acid (-SOH) mark. 2 residues coordinate K(+): K457 and G460. Catalysis depends on E464, which acts as the Charge relay system.

Belongs to the aldehyde dehydrogenase family. Dimer of dimers. The cofactor is K(+).

It carries out the reaction betaine aldehyde + NAD(+) + H2O = glycine betaine + NADH + 2 H(+). The protein operates within amine and polyamine biosynthesis; betaine biosynthesis via choline pathway; betaine from betaine aldehyde: step 1/1. Its function is as follows. Involved in the biosynthesis of the osmoprotectant glycine betaine. Catalyzes the irreversible oxidation of betaine aldehyde to the corresponding acid. In Escherichia coli (strain K12 / DH10B), this protein is Betaine aldehyde dehydrogenase.